Reading from the N-terminus, the 515-residue chain is 2-isopropylmalate synthase (515 aa).

The Pyruvate carboxyltransferase domain occupies 4 to 266 (IKFFDTTLRD…ETRLNLQEIK (263 aa)). Residues Asp13, His201, His203, and Asn237 each coordinate Mn(2+). A regulatory domain region spans residues 391–515 (QLSSIQVQYG…RAENEKVTTP (125 aa)).

This sequence belongs to the alpha-IPM synthase/homocitrate synthase family. LeuA type 1 subfamily. Homodimer. The cofactor is Mn(2+).

The protein resides in the cytoplasm. It catalyses the reaction 3-methyl-2-oxobutanoate + acetyl-CoA + H2O = (2S)-2-isopropylmalate + CoA + H(+). It functions in the pathway amino-acid biosynthesis; L-leucine biosynthesis; L-leucine from 3-methyl-2-oxobutanoate: step 1/4. Catalyzes the condensation of the acetyl group of acetyl-CoA with 3-methyl-2-oxobutanoate (2-ketoisovalerate) to form 3-carboxy-3-hydroxy-4-methylpentanoate (2-isopropylmalate). This chain is 2-isopropylmalate synthase, found in Geobacillus thermodenitrificans (strain NG80-2).